Here is a 568-residue protein sequence, read N- to C-terminus: Acetate--CoA ligase CCL3 (568 aa).

ATP-binding positions include 204-212 (TSGTTASPK), 340-345 (HTYGLS), Asp437, 449-452 (IKDR), and Lys547. Residues 272–340 (TAKGVYSAIA…MSEKGFKVAH (69 aa)) form an SBD1 region. Residues 341-417 (TYGLSETYGP…MRGNAVMKGY (77 aa)) are SBD2.

The protein belongs to the ATP-dependent AMP-binding enzyme family. In terms of tissue distribution, mostly expressed in glandular trichomes (lupulin glands) after flowering and in old leaves, and, to a lower extent, in stems, young leaves, cones and flowers.

The protein localises to the cytoplasm. It localises to the cytosol. It catalyses the reaction acetate + ATP + CoA = acetyl-CoA + AMP + diphosphate. It carries out the reaction propanoate + ATP + CoA = propanoyl-CoA + AMP + diphosphate. The enzyme catalyses butanoate + ATP + CoA = butanoyl-CoA + AMP + diphosphate. The catalysed reaction is 3-methylbutanoate + ATP + CoA = 3-methylbutanoyl-CoA + AMP + diphosphate. It catalyses the reaction pentanoate + ATP + CoA = pentanoyl-CoA + AMP + diphosphate. It carries out the reaction hexanoate + ATP + CoA = hexanoyl-CoA + AMP + diphosphate. The enzyme catalyses 2-methylpropanoate + ATP + CoA = 2-methylpropanoyl-CoA + AMP + diphosphate. The catalysed reaction is 2-methylbutanoate + ATP + CoA = 2-methylbutanoyl-CoA + AMP + diphosphate. It catalyses the reaction 2-methylpentanoate + ATP + CoA = 2-methylpentanoyl-CoA + AMP + diphosphate. It carries out the reaction 3-methylpentanoate + ATP + CoA = 3-methylpentanoyl-CoA + AMP + diphosphate. The enzyme catalyses 4-methylpentanoate + ATP + CoA = 4-methylpentanoyl-CoA + AMP + diphosphate. The protein operates within secondary metabolite biosynthesis. Functionally, involved in the biosynthesis of prenylated phenolics natural products which contribute to the bitter taste of beer and display broad biological activities. Catalyzes the ligation of CoA on propanoate to produce propanoyl-CoA. Can also use 2-methylpropanoate (isobutyric acid), acetate, butanoate, isovalerate, pentanoate, hexanoate, 2-methylbutanoate, 2-methylpentanoate, 3-methylpentanoate and 4-methylpentanoate as substrates with a lower efficiency. Triggers the formation of very short chain acyl-CoAs from the corresponding fatty acids, including acetic acid, propanoic acid, butyric acid and its isomer. The protein is Acetate--CoA ligase CCL3 of Humulus lupulus (European hop).